We begin with the raw amino-acid sequence, 62 residues long: Photosystem II reaction center protein Z (62 aa).

2 consecutive transmembrane segments (helical) span residues 8-28 (TVLALIATSFLMVIGVPVIFA) and 41-61 (FSGALLWISLVFAVGILNSFV).

The protein belongs to the PsbZ family. PSII is composed of 1 copy each of membrane proteins PsbA, PsbB, PsbC, PsbD, PsbE, PsbF, PsbH, PsbI, PsbJ, PsbK, PsbL, PsbM, PsbT, PsbY, PsbZ, Psb30/Ycf12, at least 3 peripheral proteins of the oxygen-evolving complex and a large number of cofactors. It forms dimeric complexes.

The protein resides in the plastid. The protein localises to the chloroplast thylakoid membrane. Functionally, may control the interaction of photosystem II (PSII) cores with the light-harvesting antenna, regulates electron flow through the 2 photosystem reaction centers. PSII is a light-driven water plastoquinone oxidoreductase, using light energy to abstract electrons from H(2)O, generating a proton gradient subsequently used for ATP formation. The chain is Photosystem II reaction center protein Z from Mesostigma viride (Green alga).